Reading from the N-terminus, the 624-residue chain is Ferredoxin-fold anticodon-binding domain-containing protein 1 (624 aa).

In terms of domain architecture, FDX-ACB spans 531–624; sequence LYPPCYVHDV…IQQHLYVIPR (94 aa).

The polypeptide is Ferredoxin-fold anticodon-binding domain-containing protein 1 (FDXACB1) (Homo sapiens (Human)).